Reading from the N-terminus, the 231-residue chain is Urease subunit gamma/beta (231 aa).

The segment at 1–101 (MLLTPTELER…LVTVHQPIRP (101 aa)) is urease gamma. The interval 102-231 (GQLPLAVMPT…RARAQFFKGA (130 aa)) is urease beta.

It in the N-terminal section; belongs to the urease gamma subunit family. In the C-terminal section; belongs to the urease beta subunit family. In terms of assembly, heterohexamer of 3 UreC (alpha) and 3 UreAB (gamma/beta) subunits.

It localises to the cytoplasm. The catalysed reaction is urea + 2 H2O + H(+) = hydrogencarbonate + 2 NH4(+). Its pathway is nitrogen metabolism; urea degradation; CO(2) and NH(3) from urea (urease route): step 1/1. This Pseudomonas syringae pv. syringae (strain B728a) protein is Urease subunit gamma/beta.